The primary structure comprises 162 residues: Protein LTO1 (162 aa).

A deca-GX3 motif; required for interaction with YAE1 and the CIA complex region spans residues 17–53; the sequence is GFLEGQNENIKQSFLEGKQYGLQVGFQRFTLLGQMEG.

It belongs to the LTO1 family. In terms of assembly, forms a complex with YAE1; the complex bridges the interaction between the CIA complex and RLI1. Associates with the CIA complex (via its C-terminal tryptophan).

It is found in the nucleus. Essential for life in oxygen, but nonessential under anaerobic conditions. Required for biogenesis of the large ribosomal subunit and initiation of translation in oxygen. The complex LTO1:YAE1 functions as a target specific adapter that recruits apo-RLI1 to the cytosolic iron-sulfur protein assembly (CIA) complex machinery. This is Protein LTO1 from Saccharomyces cerevisiae (strain ATCC 204508 / S288c) (Baker's yeast).